The sequence spans 125 residues: Holo-[acyl-carrier-protein] synthase (125 aa).

Mg(2+)-binding residues include Asp8 and Glu60.

The protein belongs to the P-Pant transferase superfamily. AcpS family. It depends on Mg(2+) as a cofactor.

It is found in the cytoplasm. The enzyme catalyses apo-[ACP] + CoA = holo-[ACP] + adenosine 3',5'-bisphosphate + H(+). In terms of biological role, transfers the 4'-phosphopantetheine moiety from coenzyme A to a Ser of acyl-carrier-protein. The chain is Holo-[acyl-carrier-protein] synthase from Wolbachia sp. subsp. Brugia malayi (strain TRS).